Reading from the N-terminus, the 606-residue chain is Glutamine--fructose-6-phosphate aminotransferase [isomerizing] (606 aa).

Cys2 serves as the catalytic Nucleophile; for GATase activity. A Glutamine amidotransferase type-2 domain is found at 2–217; that stretch reads CGIIGIVGKE…EGDYVALDHD (216 aa). SIS domains lie at 280 to 421 and 454 to 596; these read VPGD…ARGT and IAAD…VDQP. Lys601 (for Fru-6P isomerization activity) is an active-site residue.

As to quaternary structure, homodimer.

The protein resides in the cytoplasm. The catalysed reaction is D-fructose 6-phosphate + L-glutamine = D-glucosamine 6-phosphate + L-glutamate. Its function is as follows. Catalyzes the first step in hexosamine metabolism, converting fructose-6P into glucosamine-6P using glutamine as a nitrogen source. This chain is Glutamine--fructose-6-phosphate aminotransferase [isomerizing], found in Caulobacter vibrioides (strain ATCC 19089 / CIP 103742 / CB 15) (Caulobacter crescentus).